Reading from the N-terminus, the 530-residue chain is Arginine--tRNA ligase (530 aa).

The 'HIGH' region signature appears at 113–123 (ANPTGPLHIGH).

Belongs to the class-I aminoacyl-tRNA synthetase family. Monomer.

The protein localises to the cytoplasm. It catalyses the reaction tRNA(Arg) + L-arginine + ATP = L-arginyl-tRNA(Arg) + AMP + diphosphate. This Campylobacter jejuni subsp. jejuni serotype O:6 (strain 81116 / NCTC 11828) protein is Arginine--tRNA ligase.